Consider the following 117-residue polypeptide: UPF0344 protein GTNG_0604 (117 aa).

A run of 4 helical transmembrane segments spans residues 1–21 (MTHA…IAVS), 39–59 (LFYI…ASIS), 61–81 (LYWL…MVLV), and 97–117 (VIAL…FDLF).

It belongs to the UPF0344 family.

It is found in the cell membrane. The chain is UPF0344 protein GTNG_0604 from Geobacillus thermodenitrificans (strain NG80-2).